Reading from the N-terminus, the 375-residue chain is Proclotting enzyme (375 aa).

The signal sequence occupies residues 1–21; that stretch reads MLVNNVFSLLCFPLLMSVVRC. Residues 22–27 constitute a propeptide that is removed on maturation; it reads STLSRQ. The residue at position 30 (glutamine 30) is a Pyrrolidone carboxylic acid. The Clip domain occupies 39–84; sequence LCSNRFTEEGTCKNVLDCRILLQKNDYNLLKESICGFEGITPKVCC. 3 cysteine pairs are disulfide-bonded: cysteine 40–cysteine 83, cysteine 50–cysteine 73, and cysteine 56–cysteine 84. A disordered region spans residues 90-113; that stretch reads VISSTQAPPETTTTERPPKQIPPN. Intrachain disulfides connect cysteine 118/cysteine 248, cysteine 157/cysteine 173, cysteine 295/cysteine 311, and cysteine 322/cysteine 351. Asparagine 122 carries N-linked (GlcNAc...) asparagine glycosylation. The Peptidase S1 domain occupies 128-375; the sequence is IIGGREAPIG…FLDWIAEHMV (248 aa). Catalysis depends on histidine 172, which acts as the Charge relay system. Residues glutamate 194, asparagine 196, serine 199, and aspartate 202 each contribute to the Ca(2+) site. Catalysis depends on aspartate 228, which acts as the Charge relay system. N-linked (GlcNAc...) asparagine glycans are attached at residues asparagine 235 and asparagine 304. The active-site Charge relay system is the serine 326.

This sequence belongs to the peptidase S1 family. CLIP subfamily. In terms of assembly, in the active form, heterodimer of a light chain and a heavy chain; disulfide-linked. Forms a covalent heterodimer with intracellular coagulation inhibitor 2/LICI-2. In terms of processing, proteolytically cleaved into its mature active form by serine protease factor B. Cleavage produces a 25 kDa light chain containing the CLIP domain and a catalytic 31 kDa heavy chain which remain covalently associated through an interchain disulfide bond. Proteolytically cleaved by clotting factor G subunit beta. Contains six O-linked carbohydrate chains in the N-terminal light chain. In terms of tissue distribution, expressed in hemocytes (at protein level).

It is found in the cytoplasmic vesicle. The protein localises to the secretory vesicle. Its subcellular location is the secreted. It carries out the reaction Selective cleavage of 18-Arg-|- and 47-Arg-|- bonds in coagulogen to form coagulin and fragments.. Its activity is regulated as follows. Inhibited by intracellular coagulation inhibitor 2/LICI-2 and to a lesser extent by intracellular coagulation inhibitor 3/LICI-3. Functionally, this enzyme is closely associated with an endotoxin-sensitive hemolymph coagulation system in limulus. Its active form catalyzes the conversion of coagulogen to insoluble coagulin gel. This Tachypleus tridentatus (Japanese horseshoe crab) protein is Proclotting enzyme.